We begin with the raw amino-acid sequence, 460 residues long: Proline--tRNA ligase (460 aa).

It belongs to the class-II aminoacyl-tRNA synthetase family. ProS type 3 subfamily. As to quaternary structure, homodimer.

It localises to the cytoplasm. The catalysed reaction is tRNA(Pro) + L-proline + ATP = L-prolyl-tRNA(Pro) + AMP + diphosphate. In terms of biological role, catalyzes the attachment of proline to tRNA(Pro) in a two-step reaction: proline is first activated by ATP to form Pro-AMP and then transferred to the acceptor end of tRNA(Pro). The protein is Proline--tRNA ligase of Methanococcus maripaludis (strain C6 / ATCC BAA-1332).